The following is a 363-amino-acid chain: Aminomethyltransferase (363 aa).

The protein belongs to the GcvT family. As to quaternary structure, the glycine cleavage system is composed of four proteins: P, T, L and H.

It carries out the reaction N(6)-[(R)-S(8)-aminomethyldihydrolipoyl]-L-lysyl-[protein] + (6S)-5,6,7,8-tetrahydrofolate = N(6)-[(R)-dihydrolipoyl]-L-lysyl-[protein] + (6R)-5,10-methylene-5,6,7,8-tetrahydrofolate + NH4(+). Functionally, the glycine cleavage system catalyzes the degradation of glycine. This Staphylococcus haemolyticus (strain JCSC1435) protein is Aminomethyltransferase.